The chain runs to 105 residues: MAAKIKKGDKVVVLTGRDKGRTGEVIQVMPKEERALVRGVNIVKRHQRQTANQEGGIISKEAPIQLSNVAVADPKDGKPTRVGFQVLEDGTKVRVAKRSGERIDG.

This sequence belongs to the universal ribosomal protein uL24 family. As to quaternary structure, part of the 50S ribosomal subunit.

One of two assembly initiator proteins, it binds directly to the 5'-end of the 23S rRNA, where it nucleates assembly of the 50S subunit. In terms of biological role, one of the proteins that surrounds the polypeptide exit tunnel on the outside of the subunit. This Xanthobacter autotrophicus (strain ATCC BAA-1158 / Py2) protein is Large ribosomal subunit protein uL24.